The chain runs to 694 residues: Elongation factor G (694 aa).

Positions 8 to 287 (EDYRNFGIMA…AVVEFLPAPT (280 aa)) constitute a tr-type G domain. Residues 17-24 (AHIDAGKT), 86-90 (DTPGH), and 140-143 (NKMD) each bind GTP.

Belongs to the TRAFAC class translation factor GTPase superfamily. Classic translation factor GTPase family. EF-G/EF-2 subfamily.

The protein resides in the cytoplasm. In terms of biological role, catalyzes the GTP-dependent ribosomal translocation step during translation elongation. During this step, the ribosome changes from the pre-translocational (PRE) to the post-translocational (POST) state as the newly formed A-site-bound peptidyl-tRNA and P-site-bound deacylated tRNA move to the P and E sites, respectively. Catalyzes the coordinated movement of the two tRNA molecules, the mRNA and conformational changes in the ribosome. In Brucella ovis (strain ATCC 25840 / 63/290 / NCTC 10512), this protein is Elongation factor G.